Here is a 786-residue protein sequence, read N- to C-terminus: LPS-assembly protein LptD (786 aa).

An N-terminal signal peptide occupies residues 1–24 (MSFTSRSLLASFTGCLLYGTPAIA).

The protein belongs to the LptD family. In terms of assembly, component of the lipopolysaccharide transport and assembly complex. Interacts with LptE and LptA.

It is found in the cell outer membrane. Together with LptE, is involved in the assembly of lipopolysaccharide (LPS) at the surface of the outer membrane. This is LPS-assembly protein LptD from Aliivibrio fischeri (strain ATCC 700601 / ES114) (Vibrio fischeri).